A 75-amino-acid chain; its full sequence is UPF0270 protein PputGB1_1339 (75 aa).

Belongs to the UPF0270 family.

This is UPF0270 protein PputGB1_1339 from Pseudomonas putida (strain GB-1).